The primary structure comprises 427 residues: 3-phosphoshikimate 1-carboxyvinyltransferase (427 aa).

The 3-phosphoshikimate site is built by Lys20, Ser21, and Arg25. Residue Lys20 coordinates phosphoenolpyruvate. The phosphoenolpyruvate site is built by Gly92 and Arg120. 3-phosphoshikimate is bound by residues Ser166, Gln168, Asp312, and Lys339. Phosphoenolpyruvate is bound at residue Gln168. Residue Asp312 is the Proton acceptor of the active site. Phosphoenolpyruvate is bound by residues Arg343 and Arg385.

Belongs to the EPSP synthase family. Monomer.

It localises to the cytoplasm. The catalysed reaction is 3-phosphoshikimate + phosphoenolpyruvate = 5-O-(1-carboxyvinyl)-3-phosphoshikimate + phosphate. It functions in the pathway metabolic intermediate biosynthesis; chorismate biosynthesis; chorismate from D-erythrose 4-phosphate and phosphoenolpyruvate: step 6/7. Catalyzes the transfer of the enolpyruvyl moiety of phosphoenolpyruvate (PEP) to the 5-hydroxyl of shikimate-3-phosphate (S3P) to produce enolpyruvyl shikimate-3-phosphate and inorganic phosphate. In Streptococcus pneumoniae (strain Hungary19A-6), this protein is 3-phosphoshikimate 1-carboxyvinyltransferase.